Here is a 352-residue protein sequence, read N- to C-terminus: C-C chemokine receptor type 5 (352 aa).

Topologically, residues 1–30 (MDYQVSSPTYDIDYYTSEPCQKIKVKQIAA) are extracellular. Y3 carries the sulfotyrosine modification. 2 O-linked (GalNAc...) serine glycosylation sites follow: S6 and S7. Sulfotyrosine is present on residues Y10, Y14, and Y15. Disulfide bonds link C20-C269 and C101-C178. Residues 31–58 (RLLPPLYSLVFIFGFVGNILVVLILINC) form a helical membrane-spanning segment. The Cytoplasmic portion of the chain corresponds to 59 to 68 (KRLKSMTDIY). Residues 69-89 (LLNLAISDLLFLLTVPFWAHY) form a helical membrane-spanning segment. Residues 90 to 102 (AAAQWDFGNTMCQ) lie on the Extracellular side of the membrane. The helical transmembrane segment at 103-124 (LLTGLYFIGFFSGIFFIILLTI) threads the bilayer. At 125–141 (DRYLAIVHAVFALKART) the chain is on the cytoplasmic side. A helical transmembrane segment spans residues 142-166 (VTFGVVTSVITWVVAVFASLPRIIF). Over 167–198 (TRSQREGLHYTCSSHFPYSQYQFWKNFQTLKI) the chain is Extracellular. Residues 199 to 218 (VILGLVLPLLVMVICYSGIL) traverse the membrane as a helical segment. The Cytoplasmic portion of the chain corresponds to 219–235 (KTLLRCRNDKKRHRAVR). The helical transmembrane segment at 236-260 (LIFTIMIVYFLFWAPYNIVLLLNTF) threads the bilayer. Topologically, residues 261–277 (QEFFGLNNCSSSNRLDQ) are extracellular. Residues 278-301 (AMQVTETLGMTHCCINPIIYAFVG) form a helical membrane-spanning segment. The Cytoplasmic portion of the chain corresponds to 302–352 (EKFRNYLLVFFQKHIAKRFCKCCSIFQQDAPERASSVYTRSTGEQETSVGL). S-palmitoyl cysteine attachment occurs at residues C321, C323, and C324. Residues S336, S337, S342, and S349 each carry the phosphoserine; by BARK1 modification.

It belongs to the G-protein coupled receptor 1 family. In terms of assembly, interacts with PRAF2. Efficient ligand binding to CCL3/MIP-1alpha and CCL4/MIP-1beta requires sulfation, O-glycosylation and sialic acid modifications. Glycosylation on Ser-6 is required for efficient binding of CCL4. Interacts with GRK2. Interacts with ARRB1 and ARRB2. Interacts with CNIH4. Interacts with S100A4; this interaction stimulates T-lymphocyte chemotaxis. In terms of processing, sulfated on at least 2 of the N-terminal tyrosines. Sulfation is required for efficient binding of the chemokines, CCL3 and CCL4. Palmitoylation in the C-terminal is important for cell surface expression. Post-translationally, phosphorylation on serine residues in the C-terminal is stimulated by binding CC chemokines especially by APO-RANTES. In terms of processing, O-glycosylated, but not N-glycosylated. Ser-6 appears to be the major site even if Ser-7 may be also O-glycosylated. Also sialylated glycans present which contribute to chemokine binding. Thr-16 and Ser-17 may also be glycosylated and, if so, with small moieties such as a T-antigen.

It is found in the cell membrane. Its function is as follows. Receptor for a number of inflammatory CC-chemokines including CCL3/MIP-1-alpha, CCL4/MIP-1-beta and RANTES and subsequently transduces a signal by increasing the intracellular calcium ion level. May play a role in the control of granulocytic lineage proliferation or differentiation. Participates in T-lymphocyte migration to the infection site by acting as a chemotactic receptor. This Chlorocebus sabaeus (Green monkey) protein is C-C chemokine receptor type 5 (CCR5).